The sequence spans 274 residues: Trehalose transport system permease protein SugB (274 aa).

A run of 6 helical transmembrane segments spans residues 8 to 28, 70 to 90, 102 to 122, 137 to 157, 182 to 202, and 239 to 259; these read YWAV…LWIF, IGIG…AAYA, LIGA…TPLF, LILP…SAFF, VIVP…FIFA, and GSIA…VLIF. One can recognise an ABC transmembrane type-1 domain in the interval 66-259; that stretch reads LINSIGIGLI…IPIIVFVLIF (194 aa).

It belongs to the binding-protein-dependent transport system permease family. In terms of assembly, the complex is composed of two ATP-binding proteins (SugC), two transmembrane proteins (Suga and SugB) and a solute-binding protein (LpqY).

It localises to the cell inner membrane. In terms of biological role, part of the ABC transporter complex LpqY-SugA-SugB-SugC, which is highly specific for uptake of trehalose. Involved in the recycling of extracellular trehalose released from trehalose-containing molecules synthesized by M.tuberculosis. Trehalose uptake is essential for virulence. Probably responsible for the translocation of the substrate across the membrane. The protein is Trehalose transport system permease protein SugB (sugB) of Mycobacterium tuberculosis (strain CDC 1551 / Oshkosh).